A 428-amino-acid chain; its full sequence is MNKKINSVRGMHDYLPEELKIWKKIENIIQKILTSYCYEEIRLPILEKTKIFQRAIGNITDVVEKEMYSFKDKKGNSLTLRPEGTVGCVRAIIENNLLFQKKQRFWYLGPMFRYERPQKGRYRQFYQLGVEVFGLNTPDIDLEIILLISRLWKCLGINLHIKLEINSIGSKLDRIKYQKELVFFLEKYKNILDEDSKKRLYTNPFRILDSKNDMMQKILKKAPLLKNYINTSAINHFNSLCNMMDSYGIKYIHNQNLVRGLDYYNSTVFEWKIDQIGSQNTICAGGRYDSLVQELGGNKTSAIGFAIGIERLVLLIKSLNIISCKEEDINIYIIFIGELNKIYAISLSEEIRNIYPKLKIFVDFMTCSLSKKIKNAVDSLAHIAILIGANEIKKNCFLLKDLKRGREYFFSKSELILKIKKIFYKQGN.

Belongs to the class-II aminoacyl-tRNA synthetase family. In terms of assembly, homodimer.

It localises to the cytoplasm. The enzyme catalyses tRNA(His) + L-histidine + ATP = L-histidyl-tRNA(His) + AMP + diphosphate + H(+). The polypeptide is Histidine--tRNA ligase (Buchnera aphidicola subsp. Schizaphis graminum (strain Sg)).